The sequence spans 210 residues: MGVEDQPQTQPQTQPQQQPQMGYQPQMGYQPQAQMGYQPQAAPMGYPQQPIYQQQPQMGYQPPMGYQPQVGYQQQPPQPVYQTYCHDDHQPLLHANVVVTTTQPTVIRKSNSNEETAAVIVFIIGFFFSIVWLGGFFFIKSKSKTARTFGILSVVFFFLVLVIVVIVVSVTVTAAEKIAEENKDYYYSTSTGYYSTTGYYSTTTSYTTYY.

The segment at 1–40 (MGVEDQPQTQPQTQPQQQPQMGYQPQMGYQPQAQMGYQPQ) is disordered. The next 2 helical transmembrane spans lie at 119 to 139 (VIVFIIGFFFSIVWLGGFFFI) and 148 to 168 (TFGILSVVFFFLVLVIVVIVV).

It localises to the membrane. The sequence is that of Putative transmembrane protein DDB_G0267530 from Dictyostelium discoideum (Social amoeba).